The chain runs to 225 residues: Small ribosomal subunit protein uS2 (225 aa).

The segment covering Met1 to Ala14 has biased composition (basic and acidic residues). A disordered region spans residues Met1–Gly33.

The protein belongs to the universal ribosomal protein uS2 family.

The protein is Small ribosomal subunit protein uS2 of Methanosarcina barkeri (strain Fusaro / DSM 804).